We begin with the raw amino-acid sequence, 432 residues long: Acetylserotonin O-methyltransferase (432 aa).

S-adenosyl-L-methionine contacts are provided by residues Tyr-146, Trp-163, Asp-209, 235 to 237 (GDF), and Arg-252. The Proton donor/acceptor role is filled by His-255. Residues Asp-256, Asn-302, and Gln-306 each contribute to the substrate site. Residues 373-432 (VPGARSDAAGTGSGTGNTGSGIMLQGETLESEVSAPQAGSDVGGAGNEPRSGTLKQGDWK) are disordered.

Belongs to the class I-like SAM-binding methyltransferase superfamily. Cation-independent O-methyltransferase family. As to quaternary structure, homodimer. Expressed predominantly in the pineal gland (at protein level). Very low expression, if any, in the retina.

It catalyses the reaction N-acetylserotonin + S-adenosyl-L-methionine = melatonin + S-adenosyl-L-homocysteine + H(+). Its pathway is aromatic compound metabolism; melatonin biosynthesis; melatonin from serotonin: step 1/2. In terms of biological role, catalyzes the transfer of a methyl group onto N-acetylserotonin, producing melatonin (N-acetyl-5-methoxytryptamine). The polypeptide is Acetylserotonin O-methyltransferase (Asmt) (Rattus norvegicus (Rat)).